The sequence spans 242 residues: Uridylate kinase (242 aa).

11–14 (KLSG) lines the ATP pocket. Positions 19-24 (GEKGVG) are involved in allosteric activation by GTP. Glycine 53 is a UMP binding site. ATP is bound by residues glycine 54 and arginine 58. Residues aspartate 73 and 134-141 (IGSPYFST) each bind UMP. The ATP site is built by asparagine 162, tyrosine 168, and aspartate 171.

This sequence belongs to the UMP kinase family. Homohexamer.

Its subcellular location is the cytoplasm. It catalyses the reaction UMP + ATP = UDP + ADP. Its pathway is pyrimidine metabolism; CTP biosynthesis via de novo pathway; UDP from UMP (UMPK route): step 1/1. With respect to regulation, allosterically activated by GTP. Inhibited by UTP. Its function is as follows. Catalyzes the reversible phosphorylation of UMP to UDP. The protein is Uridylate kinase of Streptococcus pyogenes serotype M1.